The primary structure comprises 1404 residues: Proteoglycan 4 (1404 aa).

An N-terminal signal peptide occupies residues 1 to 24 (MAWKTLPIYLLLLLSVFVIQQVSS). 2 SMB domains span residues 26 to 69 (DLSS…AELS) and 66 to 108 (AELS…AEVH). Cystine bridges form between Cys30-Cys34, Cys30-Cys46, Cys34-Cys64, Cys44-Cys46, Cys44-Cys57, Cys50-Cys56, Cys57-Cys64, Cys70-Cys74, Cys70-Cys86, Cys74-Cys104, Cys84-Cys86, Cys84-Cys97, Cys90-Cys96, and Cys97-Cys104. Residues 111–966 (TSPPSSKKAP…TTQVTSTTTQ (856 aa)) are disordered. Ser123 and Ser136 each carry an O-linked (GalNAc...) serine glycan. Over residues 132 to 146 (TTKRSPKPPNKKKTK) the composition is skewed to basic residues. The span at 166–177 (SSSSSSSSSSSS) shows a compositional bias: low complexity. Residues 193 to 205 (ELQKKLKVKDNKK) are compositionally biased toward basic and acidic residues. Asn206 carries N-linked (GlcNAc...) asparagine glycosylation. The segment covering 235–252 (TPDTSTTQHNKVSTSPKI) has biased composition (polar residues). O-linked (GalNAc...) threonine glycosylation is found at Thr240 and Thr253. Over residues 266 to 276 (PNSDTSKETSL) the composition is skewed to polar residues. Residues Thr277, Thr291, and Thr305 are each glycosylated (O-linked (GalNAc...) threonine). The O-linked (GalNAc...) serine glycan is linked to Ser306. An O-linked (GalNAc...) threonine glycan is attached at Thr310. A glycan (O-linked (GalNAc...) serine) is linked at Ser317. O-linked (GalNAc...) threonine glycosylation is found at Thr324, Thr332, and Thr338. Low complexity-rich tracts occupy residues 329–348 (AKPTPKAETTTKGPALTTPK) and 356–405 (KEPA…KEPA). Repeat 1 spans residues 348–355 (KEPTPTTP). Residues 348–855 (KEPTPTTPKE…TPETPPPTTS (508 aa)) are 59 X 8 AA repeats of K-X-P-X-P-T-T-X. Residues 356-363 (KEPASTTP) form a 2; approximate repeat. Copy 3 of the repeat occupies 364–371 (KEPTPTTI). O-linked (GalNAc...) threonine glycosylation occurs at Thr367. The stretch at 372 to 378 (KSAPTTP) is one 4; approximate repeat. Ser373 carries an O-linked (GalNAc...) serine glycan. 3 O-linked (GalNAc...) threonine glycosylation sites follow: Thr376, Thr384, and Thr385. Repeat 5 spans residues 379–386 (KEPAPTTT). The stretch at 387 to 393 (KSAPTTP) is one 6; approximate repeat. An O-linked (GalNAc...) serine glycan is attached at Ser388. Residues Thr391, Thr399, Thr400, Thr407, Thr408, Thr415, and Thr423 are each glycosylated (O-linked (GalNAc...) threonine). Repeat copies occupy residues 394–401 (KEPAPTTT), 402–409 (KEPAPTTP), 410–417 (KEPAPTTT), and 418–425 (KEPAPTTT). The segment covering 413–431 (APTTTKEPAPTTTKSAPTT) has biased composition (low complexity). The stretch at 426–432 (KSAPTTP) is one 11; approximate repeat. A glycan (O-linked (GalNAc...) serine) is linked at Ser427. Thr430, Thr438, Thr439, Thr446, Thr447, Thr454, and Thr455 each carry an O-linked (GalNAc...) threonine glycan. Pro residues-rich tracts occupy residues 432–467 (PKEPAPTTPKKPAPTTPKEPAPTTPKEPTPTTPKEP) and 476–506 (PTTPKEPAPTAPKKPAPTTPKEPAPTTPKEP). 4 repeat units span residues 433-440 (KEPAPTTP), 441-448 (KKPAPTTP), 449-456 (KEPAPTTP), and 457-464 (KEPTPTTP). The stretch at 465-471 (KEPAPTT) is one 16; approximate repeat. Copy 17 of the repeat occupies 472–479 (KEPAPTTP). O-linked (GalNAc...) threonine glycosylation is found at Thr477, Thr478, Thr485, Thr493, Thr494, Thr501, Thr502, and Thr509. The 18; approximate repeat unit spans residues 480 to 487 (KEPAPTAP). One copy of the 19; approximate repeat lies at 488–495 (KKPAPTTP). 4 tandem repeats follow at residues 496-503 (KEPAPTTP), 504-511 (KEPAPTTT), 512-519 (KEPSPTTP), and 520-527 (KEPAPTTT). The span at 523-561 (APTTTKSAPTTTKEPAPTTTKSAPTTPKEPSPTTTKEPA) shows a compositional bias: low complexity. Thr525 is a glycosylation site (O-linked (GalNAc...) threonine). Residues 528–534 (KSAPTTT) form a 24; approximate repeat. Ser529 is a glycosylation site (O-linked (GalNAc...) serine). O-linked (GalNAc...) threonine glycans are attached at residues Thr532, Thr540, and Thr541. Copy 25 of the repeat occupies 535-542 (KEPAPTTT). One copy of the 26; approximate repeat lies at 543-549 (KSAPTTP). A run of 6 repeats spans residues 550 to 557 (KEPSPTTT), 558 to 565 (KEPAPTTP), 566 to 573 (KEPAPTTP), 574 to 581 (KKPAPTTP), 582 to 589 (KEPAPTTP), and 590 to 597 (KEPAPTTT). Ser553 carries O-linked (GalNAc...) serine glycosylation. O-linked (GalNAc...) threonine glycosylation is found at Thr555, Thr563, Thr564, Thr571, Thr572, Thr579, Thr580, Thr587, Thr588, Thr595, Thr603, Thr604, Thr611, Thr612, Thr616, Thr619, and Thr627. The segment covering 562–592 (PTTPKEPAPTTPKKPAPTTPKEPAPTTPKEP) has biased composition (pro residues). The stretch at 598-605 (KKPAPTTP) is one 33; approximate repeat. Residues 602-611 (PTTPKEPAPT) are compositionally biased toward pro residues. Repeat unit 34 spans residues 606–613 (KEPAPTTP). A compositionally biased stretch (low complexity) spans 612-636 (TPKETAPTTPKKLTPTTPEKLAPTT). The stretch at 614–621 (KETAPTTP) is one 35; approximate repeat. A 36; approximate repeat occupies 622–629 (KKLTPTTP). One copy of the 37; approximate repeat lies at 638–645 (EKPAPTTP). A compositionally biased stretch (pro residues) spans 653 to 667 (PEEPTPTTPEEPAPT). The stretch at 662–669 (EEPAPTTP) is one 38; approximate repeat. 9 O-linked (GalNAc...) threonine glycosylation sites follow: Thr676, Thr683, Thr684, Thr691, Thr692, Thr699, Thr700, Thr704, and Thr707. A compositionally biased stretch (pro residues) spans 677 to 699 (PKEPAPTTPKEPAPTTPKEPAPT). Tandem repeats lie at residues 678–685 (KEPAPTTP), 686–693 (KEPAPTTP), and 694–701 (KEPAPTTP). Positions 700-721 (TPKETAPTTPKGTAPTTLKEPA) are enriched in low complexity. One copy of the 42; approximate repeat lies at 702-709 (KETAPTTP). The 43; approximate repeat unit spans residues 710-717 (KGTAPTTL). Copy 44 of the repeat occupies 718-725 (KEPAPTTP). O-linked (GalNAc...) threonine glycosylation is found at Thr723, Thr724, and Thr736. Residues 728–761 (PAPKELAPTTTKEPTSTTSDKPAPTTPKGTAPTT) are compositionally biased toward low complexity. The stretch at 731-738 (KELAPTTT) is one 45; approximate repeat. The 46; approximate repeat unit spans residues 739-746 (KEPTSTTS). One copy of the 47; approximate repeat lies at 747–754 (DKPAPTTP). Residues 755-762 (KGTAPTTP) form a 48; approximate repeat. The span at 762–776 (PKEPAPTTPKEPAPT) shows a compositional bias: pro residues. A run of 2 repeats spans residues 763–770 (KEPAPTTP) and 771–778 (KEPAPTTP). 4 O-linked (GalNAc...) threonine glycosylation sites follow: Thr768, Thr769, Thr776, and Thr777. Residues 777-790 (TPKGTAPTTLKEPA) show a composition bias toward low complexity. The 51; approximate repeat unit spans residues 779–786 (KGTAPTTL). Repeat 52 spans residues 787-794 (KEPAPTTP). O-linked (GalNAc...) threonine glycosylation is found at Thr792, Thr793, and Thr805. The span at 797-830 (PAPKELAPTTTKGPTSTTSDKPAPTTPKETAPTT) shows a compositional bias: low complexity. Residues 800-807 (KELAPTTT) form a 53; approximate repeat. One copy of the 54; approximate repeat lies at 808–815 (KGPTSTTS). Ser812 carries an O-linked (GalNAc...) serine glycan. Residues 816-823 (DKPAPTTP) form a 55; approximate repeat. The 56; approximate repeat unit spans residues 824–831 (KETAPTTP). O-linked (GalNAc...) threonine glycans are attached at residues Thr829, Thr837, and Thr838. Pro residues predominate over residues 831–853 (PKEPAPTTPKKPAPTTPETPPPT). 2 repeat units span residues 832–839 (KEPAPTTP) and 840–847 (KKPAPTTP). The 59; approximate repeat unit spans residues 848–855 (ETPPPTTS). Over residues 854-866 (TSEVSTPTTTKEP) the composition is skewed to low complexity. O-linked (GalNAc...) serine glycosylation occurs at Ser892. Residues 899 to 914 (PTTKTPAATKPEMTTT) are compositionally biased toward low complexity. Residue Thr900 is glycosylated (O-linked (GalNAc...) threonine). Over residues 915–926 (AKDKTTERDLRT) the composition is skewed to basic and acidic residues. Low complexity predominate over residues 927–966 (TPETTTAAPKMTKETATTTEKTTESKITATTTQVTSTTTQ). O-linked (GalNAc...) threonine glycosylation is found at Thr930 and Thr931. An O-linked (GalNAc...) serine glycan is attached at Ser962. 6 O-linked (GalNAc...) threonine glycosylation sites follow: Thr963, Thr968, Thr975, Thr978, Thr979, and Thr980. Positions 992–1104 (ITTTEIMNKP…EDAGGAEGET (113 aa)) are disordered. Basic and acidic residues predominate over residues 999–1012 (NKPEETAKPKDRAT). Residues 1026 to 1047 (KAPKKPTSTKKPKTMPRVRKPK) show a composition bias toward basic residues. An O-linked (GalNAc...) threonine glycan is attached at Thr1039. Positions 1048–1060 (TTPTPRKMTSTMP) are enriched in low complexity. Residues 1073 to 1085 (LQTTTRPNQTPNS) show a composition bias toward polar residues. Cys1146 and Cys1403 are oxidised to a cystine. Hemopexin repeat units lie at residues 1148–1191 (GKPV…VWGI) and 1192–1239 (PSPI…FGGL). N-linked (GlcNAc...) asparagine glycosylation is present at Asn1159. O-linked (GalNAc...) threonine glycosylation occurs at Thr1161.

As to quaternary structure, homodimer; disulfide-linked. N-glycosylated. In terms of processing, O-glycosylated; contains glycosaminoglycan chondroitin sulfate and keratan sulfate. O-glycosylated with sialylated oligosaccharides which are predominantly represented by the monosialylated core type I structure, NeuNAcalpha2-3Galbeta1-3GalNAc, with smaller amounts of disialylated O-glycans. Post-translationally, the disulfide bond between Cys-1146 and Cys-1403 is essential for protein cleavage. Proteolytically cleaved by cathepsin CTSG. Highly expressed in synovial tissue, cartilage and liver and weakly in heart and lung. Isoform B is expressed in kidney, lung, liver, heart and brain. Isoform C and isoform D are widely expressed.

It localises to the secreted. In terms of biological role, plays a role in boundary lubrication within articulating joints. Prevents protein deposition onto cartilage from synovial fluid by controlling adhesion-dependent synovial growth and inhibiting the adhesion of synovial cells to the cartilage surface. Isoform F plays a role as a growth factor acting on the primitive cells of both hematopoietic and endothelial cell lineages. The chain is Proteoglycan 4 (PRG4) from Homo sapiens (Human).